Reading from the N-terminus, the 577-residue chain is Double-stranded RNA-binding protein Staufen homolog 1 (577 aa).

Ser2 is modified (N-acetylserine). Over residues 34–44 (SIPSTTSSLPS) the composition is skewed to polar residues. The segment at 34–55 (SIPSTTSSLPSENAGRPIQNSA) is disordered. Positions 72–162 (TPTVELNALC…AAKALRILQN (91 aa)) constitute a DRBM 1 domain. Residue Arg108 is modified to Asymmetric dimethylarginine. Position 115 is an asymmetric dimethylarginine; alternate (Arg115). Position 115 is an omega-N-methylarginine; alternate (Arg115). Ser176 bears the Phosphoserine mark. In terms of domain architecture, DRBM 2 spans 184 to 251 (SEISQVFEIA…AIAVLEELKK (68 aa)). The residue at position 278 (Ser278) is a Phosphoserine. The region spanning 286 to 354 (NPISRLAQIQ…AENMLEILGF (69 aa)) is the DRBM 3 domain. The tract at residues 360 to 397 (QPTKPALKSEEKTPIKKPGDGRKVTFFEPGSGDENGTS) is disordered. The span at 366-384 (LKSEEKTPIKKPGDGRKVT) shows a compositional bias: basic and acidic residues. Ser390 bears the Phosphoserine mark.

Binds tubulin. Binds with low affinity single-stranded RNA or DNA homopolymers. Interacts with CASC3 in an RNA-dependent manner. Identified in a mRNP complex, at least composed of DHX9, DDX3X, ELAVL1, HNRNPU, IGF2BP1, ILF3, PABPC1, PCBP2, PTBP2, STAU1, STAU2, SYNCRIP and YBX1. In terms of assembly, (Microbial infection) Interacts with HERV-K rec and gag proteins. As to quaternary structure, (Microbial infection) Interacts with HIV-1 GAG polyprotein. (Microbial infection) Interacts with influenza virus NS1 protein. In terms of assembly, (Microbial infection) Interacts with Ebola virus NP, VP30 and VP35. Widely expressed. Expressed in brain, pancreas, heart, skeletal muscles, liver, lung, kidney and placenta.

The protein localises to the cytoplasm. It localises to the rough endoplasmic reticulum. Its function is as follows. Binds double-stranded RNA (regardless of the sequence) and tubulin. May play a role in specific positioning of mRNAs at given sites in the cell by cross-linking cytoskeletal and RNA components, and in stimulating their translation at the site. Functionally, (Microbial infection) Plays a role in virus particles production of many viruses including of HIV-1, HERV-K, ebola virus and influenza virus. Acts by interacting with various viral proteins involved in particle budding process. The polypeptide is Double-stranded RNA-binding protein Staufen homolog 1 (STAU1) (Homo sapiens (Human)).